Consider the following 223-residue polypeptide: Probable transaldolase (223 aa).

Residue Lys-91 is the Schiff-base intermediate with substrate of the active site.

Belongs to the transaldolase family. Type 3B subfamily.

The protein resides in the cytoplasm. The catalysed reaction is D-sedoheptulose 7-phosphate + D-glyceraldehyde 3-phosphate = D-erythrose 4-phosphate + beta-D-fructose 6-phosphate. Its pathway is carbohydrate degradation; pentose phosphate pathway; D-glyceraldehyde 3-phosphate and beta-D-fructose 6-phosphate from D-ribose 5-phosphate and D-xylulose 5-phosphate (non-oxidative stage): step 2/3. Transaldolase is important for the balance of metabolites in the pentose-phosphate pathway. The polypeptide is Probable transaldolase (Chlorobium phaeobacteroides (strain BS1)).